The sequence spans 548 residues: 4-methyl-5-nitrocatechol 5-monooxygenase (548 aa).

The protein belongs to the PheA/TfdB FAD monooxygenase family. Monomer. FAD is required as a cofactor.

The catalysed reaction is 4-methyl-5-nitrocatechol + NADPH + O2 = 2-hydroxy-5-methylquinone + nitrite + NADP(+) + H2O + H(+). The enzyme catalyses 4-methyl-5-nitrocatechol + NADH + O2 = 2-hydroxy-5-methylquinone + nitrite + NAD(+) + H2O + H(+). With respect to regulation, activated by magnesium or manganese ions. Inhibited by concentrations of 4-methyl-5-nitrocatechol (MNC) above 2 mM. Functionally, involved in the degradation of 2,4-dinitrotoluene (2,4-DNT). Catalyzes the removal of the nitro group from 4-methyl-5-nitrocatechol (MNC) to yield 2-hydroxy-5-methylquinone. It can use both NADH and NADPH as electron donors, but prefers NADPH. Also able to use 4-nitrocatechol as substrate. This Burkholderia sp protein is 4-methyl-5-nitrocatechol 5-monooxygenase.